Here is a 462-residue protein sequence, read N- to C-terminus: Transcription initiation factor TFIID subunit 7-like (462 aa).

2 disordered regions span residues 1–97 (MECP…VPDE) and 327–366 (DSRS…SEEY). 2 stretches are compositionally biased toward low complexity: residues 16-30 (STPT…SQQE) and 66-77 (DADSSAQAAAQA). The span at 333 to 365 (DDDEDEDDEDEDEDEDEDEDEDKEEEEEDCSEE) shows a compositional bias: acidic residues. Residues 342–462 (DEDEDEDEDE…QEQLQRFLKK (121 aa)) are a coiled coil.

Belongs to the TAF7 family. As to quaternary structure, TFIID is composed of TATA binding protein (TBP) and a number of TBP-associated factors (TAFs). TAF7L may replace TAF7 in a spermatogenesis-specific form of TFIID. Interacts with TBP; the interaction occurs in a sub-population of cells (pachytene and haploid round spermatids) and is developmentally regulated through differential intracellular localization of the two proteins. Interacts with TAF1. Testis-specific.

It is found in the nucleus. The protein localises to the cytoplasm. In terms of biological role, probably functions as a spermatogenesis-specific component of the DNA-binding general transcription factor complex TFIID, a multimeric protein complex that plays a central role in mediating promoter responses to various activators and repressors. May play a role in spermatogenesis. In Homo sapiens (Human), this protein is Transcription initiation factor TFIID subunit 7-like (TAF7L).